The chain runs to 483 residues: Protein FIZZY-RELATED 2 (483 aa).

The interval 1–28 (MEEEDPTASNVITNSNSSSMRNLSPAMN) is disordered. The span at 7-28 (TASNVITNSNSSSMRNLSPAMN) shows a compositional bias: polar residues. WD repeat units lie at residues 174 to 211 (QDDFYLNLVDWSAQNVLAVGLGNCVYLWNACSSKVTKL), 215 to 254 (GAEDSVCSVGWALRGTHLAVGTSTGKVQIWDASRCKRTRT), 257 to 294 (GHRLRVGALAWGSSVLSSGSRDKSILQRDIRCQEDHVS), 298 to 337 (GHKSEVCGLKWSYDNRELASGGNDNRLFVWNQHSTQPVLK), 340 to 382 (EHTA…HLSS), 384 to 425 (DTCS…KIAT), and 428 to 467 (GHTYRVLYLAVSPDGQTIVTGAGDETLRFWNVFPSPKSQN).

The protein belongs to the WD repeat CDC20/Fizzy family. Associates with the APC/C complex. Interacts with CDC20-1, CDC20-2, CYCA1-1, CYCA1-2, CYCA3-4, CYCB1-1 and CYCB1-2. Binds to GIG1 and PYM. In terms of tissue distribution, expressed in seedlings, flowers, leaves and roots. Expressed in the differentiating cell files of the root elongation zone.

Its subcellular location is the nucleus. It participates in protein modification; protein ubiquitination. In terms of biological role, activator protein that regulates the ubiquitin ligase activity and substrate specificity of the anaphase promoting complex/cyclosome (APC/C). Necessary and sufficient for endoreduplication and correct cell expansion. Controls meristem size by stimulating endoreduplication in the elongation zone. This chain is Protein FIZZY-RELATED 2 (FZR2), found in Arabidopsis thaliana (Mouse-ear cress).